A 302-amino-acid chain; its full sequence is Recombination-associated protein RdgC (302 aa).

It belongs to the RdgC family.

The protein localises to the cytoplasm. The protein resides in the nucleoid. May be involved in recombination. This Actinobacillus succinogenes (strain ATCC 55618 / DSM 22257 / CCUG 43843 / 130Z) protein is Recombination-associated protein RdgC.